Here is a 241-residue protein sequence, read N- to C-terminus: Ribonuclease PH (241 aa).

Phosphate is bound by residues Arg89 and 127–129 (GTR).

This sequence belongs to the RNase PH family. In terms of assembly, homohexameric ring arranged as a trimer of dimers.

The enzyme catalyses tRNA(n+1) + phosphate = tRNA(n) + a ribonucleoside 5'-diphosphate. Its function is as follows. Phosphorolytic 3'-5' exoribonuclease that plays an important role in tRNA 3'-end maturation. Removes nucleotide residues following the 3'-CCA terminus of tRNAs; can also add nucleotides to the ends of RNA molecules by using nucleoside diphosphates as substrates, but this may not be physiologically important. Probably plays a role in initiation of 16S rRNA degradation (leading to ribosome degradation) during starvation. This chain is Ribonuclease PH, found in Xanthomonas euvesicatoria pv. vesicatoria (strain 85-10) (Xanthomonas campestris pv. vesicatoria).